We begin with the raw amino-acid sequence, 36 residues long: Photosystem I reaction center subunit VIII (36 aa).

The helical transmembrane segment at 9-29 (ILVPLVGLVFPAITMVSLFLY) threads the bilayer.

The protein belongs to the PsaI family.

It is found in the plastid. It localises to the chloroplast thylakoid membrane. May help in the organization of the PsaL subunit. This chain is Photosystem I reaction center subunit VIII, found in Zygnema circumcarinatum (Green alga).